The sequence spans 219 residues: Thiamine-phosphate synthase (219 aa).

Residues 44-48 (QFREK) and Asn79 contribute to the 4-amino-2-methyl-5-(diphosphooxymethyl)pyrimidine site. Residues Asp80 and Asp99 each coordinate Mg(2+). Position 117 (Ser117) interacts with 4-amino-2-methyl-5-(diphosphooxymethyl)pyrimidine. 143-145 (TST) is a 2-[(2R,5Z)-2-carboxy-4-methylthiazol-5(2H)-ylidene]ethyl phosphate binding site. Lys146 is a 4-amino-2-methyl-5-(diphosphooxymethyl)pyrimidine binding site. 2-[(2R,5Z)-2-carboxy-4-methylthiazol-5(2H)-ylidene]ethyl phosphate-binding positions include Gly175 and 195–196 (IS).

Belongs to the thiamine-phosphate synthase family. Requires Mg(2+) as cofactor.

It catalyses the reaction 2-[(2R,5Z)-2-carboxy-4-methylthiazol-5(2H)-ylidene]ethyl phosphate + 4-amino-2-methyl-5-(diphosphooxymethyl)pyrimidine + 2 H(+) = thiamine phosphate + CO2 + diphosphate. The enzyme catalyses 2-(2-carboxy-4-methylthiazol-5-yl)ethyl phosphate + 4-amino-2-methyl-5-(diphosphooxymethyl)pyrimidine + 2 H(+) = thiamine phosphate + CO2 + diphosphate. The catalysed reaction is 4-methyl-5-(2-phosphooxyethyl)-thiazole + 4-amino-2-methyl-5-(diphosphooxymethyl)pyrimidine + H(+) = thiamine phosphate + diphosphate. It functions in the pathway cofactor biosynthesis; thiamine diphosphate biosynthesis; thiamine phosphate from 4-amino-2-methyl-5-diphosphomethylpyrimidine and 4-methyl-5-(2-phosphoethyl)-thiazole: step 1/1. Its function is as follows. Condenses 4-methyl-5-(beta-hydroxyethyl)thiazole monophosphate (THZ-P) and 2-methyl-4-amino-5-hydroxymethyl pyrimidine pyrophosphate (HMP-PP) to form thiamine monophosphate (TMP). The sequence is that of Thiamine-phosphate synthase from Bacillus cereus (strain AH820).